A 335-amino-acid polypeptide reads, in one-letter code: Glyceraldehyde-3-phosphate dehydrogenase (335 aa).

NAD(+) is bound by residues 12 to 13 (RI), D34, R78, and S120. D-glyceraldehyde 3-phosphate-binding positions include 151–153 (SCT) and T182. C152 serves as the catalytic Nucleophile. N183 is an NAD(+) binding site. D-glyceraldehyde 3-phosphate contacts are provided by residues R197, 210-211 (TG), and R233. N315 is an NAD(+) binding site.

Belongs to the glyceraldehyde-3-phosphate dehydrogenase family. As to quaternary structure, homotetramer.

The protein resides in the cytoplasm. The enzyme catalyses D-glyceraldehyde 3-phosphate + phosphate + NAD(+) = (2R)-3-phospho-glyceroyl phosphate + NADH + H(+). The protein operates within carbohydrate degradation; glycolysis; pyruvate from D-glyceraldehyde 3-phosphate: step 1/5. Its function is as follows. Catalyzes the oxidative phosphorylation of glyceraldehyde 3-phosphate (G3P) to 1,3-bisphosphoglycerate (BPG) using the cofactor NAD. The first reaction step involves the formation of a hemiacetal intermediate between G3P and a cysteine residue, and this hemiacetal intermediate is then oxidized to a thioester, with concomitant reduction of NAD to NADH. The reduced NADH is then exchanged with the second NAD, and the thioester is attacked by a nucleophilic inorganic phosphate to produce BPG. In Priestia megaterium (strain DSM 319 / IMG 1521) (Bacillus megaterium), this protein is Glyceraldehyde-3-phosphate dehydrogenase (gap).